The chain runs to 204 residues: MSFTVDDRVLALAGIAQALQQVRRIADTGHSDAAAVRTAVDSVFRVDASSPQEVFGDRHALKSGLRLLHNYFRSQGQDPILPKLALSVLQLERRFVQDGATVNKVASGIERAQRQANELGDSGHPDVLANLGGLYADTISHLKPRVMVQGNPHYLGQAGVVAEIRALLLAAVRAAVLWRQLGGSYWDFLFGRKAMIEAVDRQLA.

This sequence belongs to the HflD family.

The protein localises to the cytoplasm. The protein resides in the cell inner membrane. The polypeptide is High frequency lysogenization protein HflD homolog (Stenotrophomonas maltophilia (strain K279a)).